A 142-amino-acid polypeptide reads, in one-letter code: Probable pilin MJ0832.1 (142 aa).

Residues 1–8 (MLKFRKRG) constitute a propeptide that is removed on maturation. Residues 9-17 (QISLEFSLL) carry the QXSXEXXXL motif.

The N-terminus is cleaved by the prepilin peptidase EppA, which recognizes the class III signal sequence.

Its subcellular location is the secreted. The protein localises to the cell surface. It localises to the fimbrium. The sequence is that of Probable pilin MJ0832.1 from Methanocaldococcus jannaschii (strain ATCC 43067 / DSM 2661 / JAL-1 / JCM 10045 / NBRC 100440) (Methanococcus jannaschii).